We begin with the raw amino-acid sequence, 688 residues long: DNA topoisomerase 1 (688 aa).

The 111-residue stretch at 3–113 (ENLVIVESPA…TENRVVFNEI (111 aa)) folds into the Toprim domain. Residues Glu-9 and Asp-82 each contribute to the Mg(2+) site. Residues 129 to 556 (EMELVDAQQA…FYSSFKQDVE (428 aa)) enclose the Topo IA-type catalytic domain. Residues 163–168 (SAGRVQ) form an interaction with DNA region. Tyr-298 acts as the O-(5'-phospho-DNA)-tyrosine intermediate in catalysis. The segment at 322–349 (YGNDYTSNRKSKGQGDQDAHEAIRPSST) is disordered. Over residues 334–344 (GQGDQDAHEAI) the composition is skewed to basic and acidic residues. C4-type zinc fingers lie at residues 576–602 (CEVC…FPDC), 616–644 (CPKC…YPEC), and 657–680 (CPKC…CSNC).

Belongs to the type IA topoisomerase family. In terms of assembly, monomer. It depends on Mg(2+) as a cofactor.

It catalyses the reaction ATP-independent breakage of single-stranded DNA, followed by passage and rejoining.. Functionally, releases the supercoiling and torsional tension of DNA, which is introduced during the DNA replication and transcription, by transiently cleaving and rejoining one strand of the DNA duplex. Introduces a single-strand break via transesterification at a target site in duplex DNA. The scissile phosphodiester is attacked by the catalytic tyrosine of the enzyme, resulting in the formation of a DNA-(5'-phosphotyrosyl)-enzyme intermediate and the expulsion of a 3'-OH DNA strand. The free DNA strand then undergoes passage around the unbroken strand, thus removing DNA supercoils. Finally, in the religation step, the DNA 3'-OH attacks the covalent intermediate to expel the active-site tyrosine and restore the DNA phosphodiester backbone. In Staphylococcus saprophyticus subsp. saprophyticus (strain ATCC 15305 / DSM 20229 / NCIMB 8711 / NCTC 7292 / S-41), this protein is DNA topoisomerase 1.